A 235-amino-acid chain; its full sequence is Thrombin-like enzyme bilineobin (235 aa).

In terms of domain architecture, Peptidase S1 spans 1–227 (IIGGDECNIN…HLDWIQSIIA (227 aa)). 6 disulfide bridges follow: C7-C141, C28-C44, C78-C234, C120-C188, C152-C167, and C178-C203. H43 (charge relay system) is an active-site residue. N-linked (GlcNAc...) asparagine glycosylation is found at N45, N57, and N81. The active-site Charge relay system is D88. N132 and N148 each carry an N-linked (GlcNAc...) asparagine glycan. S182 acts as the Charge relay system in catalysis. An N-linked (GlcNAc...) asparagine glycan is attached at N229.

Belongs to the peptidase S1 family. Snake venom subfamily. Monomer. Post-translationally, glycosylated. In terms of tissue distribution, expressed by the venom gland.

The protein resides in the secreted. Its activity is regulated as follows. Not inhibited by hirudin. In terms of biological role, thrombin-like snake venom serine protease that has coagulant activity by releasing fibrinopeptides A and B from fibrinogen alpha (FGA) and beta (FGB), with a preference for beta chain. The chain is Thrombin-like enzyme bilineobin from Agkistrodon bilineatus (Cantil).